The primary structure comprises 148 residues: Putative adenylate kinase (148 aa).

5 residues coordinate ATP: glycine 9, glycine 11, lysine 12, serine 13, and threonine 14. An NMP region spans residues 28–44 (EGNALAVKYGCLSGDEV). Positions 91 to 101 (DRGYSPEKIDE) are LID. An ATP-binding site is contributed by arginine 92.

This sequence belongs to the adenylate kinase family. AK6 subfamily. In terms of assembly, interacts with uS11. Not a structural component of 40S pre-ribosomes, but transiently interacts with them by binding to uS11.

The enzyme catalyses AMP + ATP = 2 ADP. The catalysed reaction is ATP + H2O = ADP + phosphate + H(+). Broad-specificity nucleoside monophosphate (NMP) kinase that catalyzes the reversible transfer of the terminal phosphate group between nucleoside triphosphates and monophosphates. Also has ATPase activity. Involved in the late maturation steps of the 30S ribosomal particles, specifically 16S rRNA maturation. While NMP activity is not required for ribosome maturation, ATPase activity is. Associates transiently with small ribosomal subunit protein uS11. ATP hydrolysis breaks the interaction with uS11. May temporarily remove uS11 from the ribosome to enable a conformational change of the ribosomal RNA that is needed for the final maturation step of the small ribosomal subunit. The chain is Putative adenylate kinase from Thermoplasma acidophilum (strain ATCC 25905 / DSM 1728 / JCM 9062 / NBRC 15155 / AMRC-C165).